Reading from the N-terminus, the 1558-residue chain is Arginine-glutamic acid dipeptide repeats protein (1558 aa).

A compositionally biased stretch (basic and acidic residues) spans 1–36 (MTADKDKDKDKEKDRDRDRDRERDKRDKARESENAR). The disordered stretch occupies residues 1–90 (MTADKDKDKD…KKKSRYERTD (90 aa)). A phosphoserine mark is found at serine 53 and serine 56. Positions 74–85 (KSRKKPPKKKSR) are enriched in basic residues. In terms of domain architecture, BAH spans 103–283 (VVYRPGDCVY…PETRRLNSTQ (181 aa)). Threonine 120 bears the Phosphothreonine mark. Residues serine 142 and serine 304 each carry the phosphoserine modification. The region spanning 284-387 (GEIRVGPSHQ…KALQRLVKKP (104 aa)) is the ELM2 domain. One can recognise an SANT domain in the interval 391 to 443 (LIEKCWTEDEVKRFVKGLRQYGKNFFRIRKELLPSKETGELITFYYYWKKTPE). The segment at 464-495 (TRTASTPVNTPSRPPSSEFLDLSSASEDDFDS) is disordered. Over residues 465–474 (RTASTPVNTP) the composition is skewed to polar residues. Over residues 479–488 (SSEFLDLSSA) the composition is skewed to low complexity. The GATA-type zinc finger occupies 507–532 (CRHCFTTTSKDWHHGGRENILLCTDC). The interval 542 to 1125 (LPPIEKPVDP…PSHASQSARF (584 aa)) is disordered. Lysine 560 participates in a covalent cross-link: Glycyl lysine isopeptide (Lys-Gly) (interchain with G-Cter in SUMO2). Threonine 593 bears the Phosphothreonine mark. Serine 594, serine 600, and serine 613 each carry phosphoserine. The segment covering 609–623 (SGRNSPSAASTSSND) has biased composition (low complexity). The segment covering 624 to 640 (SKAETVKKSAKKVKEEA) has biased composition (basic and acidic residues). Residue lysine 637 forms a Glycyl lysine isopeptide (Lys-Gly) (interchain with G-Cter in SUMO2) linkage. Phosphoserine is present on residues serine 642, serine 656, serine 675, and serine 679. Residues 652 to 673 (EKVASDTEDTDRITSKKTKTQE) are compositionally biased toward basic and acidic residues. Basic and acidic residues predominate over residues 688–708 (SDSRSVNDEGSSDPKDIDQDN). Over residues 709-720 (RSTSPSIPSPQD) the composition is skewed to polar residues. Low complexity predominate over residues 726 to 752 (DSSAQQQMLQAQPPALQAPSGAASAPS). Polar residues predominate over residues 778 to 792 (SPATSQPPNQTQSTV). The span at 806–823 (LHPPRLPSPHPPLQPMTA) shows a compositional bias: pro residues. 3 stretches are compositionally biased toward low complexity: residues 824–857 (PPSQSSAQPHPQPSLHSQGPPGPHSLQTGPLLQH), 865–874 (GLPSQPSQGQ), and 891–901 (QLPASQSALQP). Residues 902–932 (QQPPREQPLPPAPLAMPHIKPPPTTPIPQLP) show a composition bias toward pro residues. Over residues 962–972 (KPLSSLSTHHP) the composition is skewed to low complexity. Residues 1012 to 1023 (HPTTGLHQVPSQ) are compositionally biased toward polar residues. Over residues 1027–1053 (PQHPFVPGGPPPITPPSCPPTSTPPAG) the composition is skewed to pro residues. Positions 1054–1077 (PSSSSQPPCSAAVSSGGSVPGAPS) are enriched in low complexity. A phosphoserine mark is found at serine 1098, serine 1105, and serine 1107. The segment covering 1098 to 1109 (SPPPPPRSPSPE) has biased composition (pro residues). Phosphothreonine is present on threonine 1111. A coiled-coil region spans residues 1148 to 1203 (GSKLAKKREEAIEKAKREAEQKAREEREREKEKEKEREREREREREAERAAKASSS). An N6-acetyllysine modification is found at lysine 1150. Positions 1154-1198 (KREEAIEKAKREAEQKAREEREREKEKEKEREREREREREAERAA) are enriched in basic and acidic residues. Positions 1154-1238 (KREEAIEKAK…TTIAAVPPYI (85 aa)) are disordered. A Phosphotyrosine modification is found at tyrosine 1251. Residue serine 1258 is modified to Phosphoserine.

As to quaternary structure, interacts with HDAC1 and ATN1. Interaction with ATN1 is improved when the poly-Gln region of ATN1 is extended. Interacts with FAT1.

It is found in the nucleus. It localises to the PML body. Its function is as follows. Plays a role as a transcriptional repressor during development. May play a role in the control of cell survival. The protein is Arginine-glutamic acid dipeptide repeats protein (Rere) of Mus musculus (Mouse).